Consider the following 534-residue polypeptide: Probable bifunctional tRNA threonylcarbamoyladenosine biosynthesis protein (534 aa).

The interval Met1 to Trp325 is kae1. Fe cation is bound by residues His108, His112, and Tyr129. Residues Tyr129–Gly133, Asp161, Gly174, Glu178, and Asn258 contribute to the L-threonylcarbamoyladenylate site. Asp286 is a Fe cation binding site. The Protein kinase domain maps to Leu335 to Asp534. ATP-binding positions include Leu340 to Ile348 and Lys361. Asp451 (proton acceptor; for kinase activity) is an active-site residue.

This sequence in the N-terminal section; belongs to the KAE1 / TsaD family. In the C-terminal section; belongs to the protein kinase superfamily. Tyr protein kinase family. BUD32 subfamily. In terms of assembly, component of the KEOPS complex that consists of Kae1, Bud32, Cgi121 and Pcc1; the whole complex dimerizes. The cofactor is Fe(2+).

Its subcellular location is the cytoplasm. The catalysed reaction is L-seryl-[protein] + ATP = O-phospho-L-seryl-[protein] + ADP + H(+). It catalyses the reaction L-threonyl-[protein] + ATP = O-phospho-L-threonyl-[protein] + ADP + H(+). The enzyme catalyses L-threonylcarbamoyladenylate + adenosine(37) in tRNA = N(6)-L-threonylcarbamoyladenosine(37) in tRNA + AMP + H(+). Its function is as follows. Required for the formation of a threonylcarbamoyl group on adenosine at position 37 (t(6)A37) in tRNAs that read codons beginning with adenine. Is a component of the KEOPS complex that is probably involved in the transfer of the threonylcarbamoyl moiety of threonylcarbamoyl-AMP (TC-AMP) to the N6 group of A37. The Kae1 domain likely plays a direct catalytic role in this reaction. The Bud32 domain probably displays kinase activity that regulates Kae1 function. The chain is Probable bifunctional tRNA threonylcarbamoyladenosine biosynthesis protein from Methanothermobacter thermautotrophicus (strain ATCC 29096 / DSM 1053 / JCM 10044 / NBRC 100330 / Delta H) (Methanobacterium thermoautotrophicum).